The following is a 106-amino-acid chain: Iron-sulfur cluster assembly protein CyaY (106 aa).

It belongs to the frataxin family.

In terms of biological role, involved in iron-sulfur (Fe-S) cluster assembly. May act as a regulator of Fe-S biogenesis. The polypeptide is Iron-sulfur cluster assembly protein CyaY (Salmonella dublin (strain CT_02021853)).